The chain runs to 272 residues: Undecaprenyl-diphosphatase (272 aa).

Helical transmembrane passes span 5–25 (YSLFVAFILGVVEGLTEFLPV), 45–65 (AKTFEVIIQLGSILAVVVVFW), 88–108 (HLTLGHILLAMIPAVILGLAF), 114–134 (ALFDPKSVMYALVAGGVLLLA), 153–172 (YRQAFAIGCFQCLALWPGFS), 189–209 (YAASEFSFILAVPMMIGASGL), 221–241 (GDLPMFAVGFITAFIVALIAI), and 251–271 (ISFVPFAIYRFIVAAVVYWVF).

Belongs to the UppP family.

It localises to the cell inner membrane. The enzyme catalyses di-trans,octa-cis-undecaprenyl diphosphate + H2O = di-trans,octa-cis-undecaprenyl phosphate + phosphate + H(+). Functionally, catalyzes the dephosphorylation of undecaprenyl diphosphate (UPP). Confers resistance to bacitracin. This is Undecaprenyl-diphosphatase from Yersinia pseudotuberculosis serotype IB (strain PB1/+).